Reading from the N-terminus, the 476-residue chain is Probable cytosolic Fe-S cluster assembly factor GH10760 (476 aa).

Residues C23, C68, C71, C74, C187, C243, C395, and C399 each coordinate [4Fe-4S] cluster.

Belongs to the NARF family.

Its function is as follows. Component of the cytosolic iron-sulfur (Fe/S) protein assembly machinery. Required for maturation of extramitochondrial Fe/S proteins. In Drosophila grimshawi (Hawaiian fruit fly), this protein is Probable cytosolic Fe-S cluster assembly factor GH10760.